The sequence spans 161 residues: Cyclic pyranopterin monophosphate synthase (161 aa).

Substrate is bound by residues 75–77 and 113–114; these read LCH and ME. Asp128 is an active-site residue.

It belongs to the MoaC family. Homohexamer; trimer of dimers.

The catalysed reaction is (8S)-3',8-cyclo-7,8-dihydroguanosine 5'-triphosphate = cyclic pyranopterin phosphate + diphosphate. The protein operates within cofactor biosynthesis; molybdopterin biosynthesis. Functionally, catalyzes the conversion of (8S)-3',8-cyclo-7,8-dihydroguanosine 5'-triphosphate to cyclic pyranopterin monophosphate (cPMP). The polypeptide is Cyclic pyranopterin monophosphate synthase (Salmonella dublin (strain CT_02021853)).